Reading from the N-terminus, the 655-residue chain is Tetratricopeptide repeat protein 30 homolog (655 aa).

TPR repeat units lie at residues 10-43 (EGHV…ANTR), 44-76 (AGLS…APKE), 143-176 (ADTL…GGFN), 178-210 (LVAY…GMRN), 385-418 (LAAK…YLPV), 450-484 (SIWR…HSDD), and 534-567 (CIVN…GSGN).

Belongs to the TTC30/dfy-1/fleer family.

The protein resides in the cell projection. It is found in the cilium. Functionally, required for polyglutamylation of axonemal tubulin in sensory cilia. Plays a role in anterograde intraflagellar transport (IFT), the process by which cilia precursors are transported from the base of the cilium to the site of their incorporation at the tip. This chain is Tetratricopeptide repeat protein 30 homolog, found in Drosophila melanogaster (Fruit fly).